Here is a 626-residue protein sequence, read N- to C-terminus: tRNA uridine 5-carboxymethylaminomethyl modification enzyme MnmG (626 aa).

13–18 serves as a coordination point for FAD; it reads GGGHAG. Residue 273 to 287 participates in NAD(+) binding; sequence GPRYCPSIEDKIHRF.

The protein belongs to the MnmG family. Homodimer. Heterotetramer of two MnmE and two MnmG subunits. FAD is required as a cofactor.

The protein localises to the cytoplasm. Its function is as follows. NAD-binding protein involved in the addition of a carboxymethylaminomethyl (cmnm) group at the wobble position (U34) of certain tRNAs, forming tRNA-cmnm(5)s(2)U34. This Acinetobacter baumannii (strain AYE) protein is tRNA uridine 5-carboxymethylaminomethyl modification enzyme MnmG.